Reading from the N-terminus, the 327-residue chain is Ventral anterior homeobox 1 (327 aa).

Over residues 1–34 the composition is skewed to basic and acidic residues; the sequence is MFGKQDKMDVRCSTETEANRVSKNGHKEGKDSKG. Residues 1-41 are disordered; it reads MFGKQDKMDVRCSTETEANRVSKNGHKEGKDSKGAEGNIST. A DNA-binding region (homeobox) is located at residues 99-158; that stretch reads PKRTRTSFTAEQLYRLEMEFQRCQYVVGRERTELARQLNLSETQVKVWFQNRRTKQKKDQ. Residues 230–245 are compositionally biased toward low complexity; it reads APAGGSPHPPSAGTAA. The interval 230–249 is disordered; the sequence is APAGGSPHPPSAGTAAGPPP.

This sequence belongs to the EMX homeobox family.

The protein localises to the nucleus. Transcription factor that plays a role in establishing dorsal-ventral polarity in the neural retina. The polypeptide is Ventral anterior homeobox 1 (VAX1) (Gallus gallus (Chicken)).